The primary structure comprises 322 residues: Glycerol-3-phosphate dehydrogenase [NAD(P)+] (322 aa).

NADPH is bound by residues tryptophan 13, histidine 33, and lysine 99. Sn-glycerol 3-phosphate contacts are provided by lysine 99, glycine 127, and serine 129. Alanine 131 is an NADPH binding site. Lysine 182, aspartate 235, serine 245, arginine 246, and asparagine 247 together coordinate sn-glycerol 3-phosphate. Lysine 182 acts as the Proton acceptor in catalysis. Residue arginine 246 participates in NADPH binding. Glutamate 272 provides a ligand contact to NADPH.

Belongs to the NAD-dependent glycerol-3-phosphate dehydrogenase family.

It localises to the cytoplasm. It catalyses the reaction sn-glycerol 3-phosphate + NAD(+) = dihydroxyacetone phosphate + NADH + H(+). It carries out the reaction sn-glycerol 3-phosphate + NADP(+) = dihydroxyacetone phosphate + NADPH + H(+). The protein operates within membrane lipid metabolism; glycerophospholipid metabolism. Catalyzes the reduction of the glycolytic intermediate dihydroxyacetone phosphate (DHAP) to sn-glycerol 3-phosphate (G3P), the key precursor for phospholipid synthesis. The chain is Glycerol-3-phosphate dehydrogenase [NAD(P)+] from Ruthia magnifica subsp. Calyptogena magnifica.